Reading from the N-terminus, the 529-residue chain is Glutamyl-tRNA(Gln) amidotransferase subunit B-2, chloroplastic/mitochondrial (529 aa).

A disordered region spans residues 17-61 (STRVSLPRGSIPPPPTSSSSSSSSSREGRRPRFFSTTTTSAERPV).

Belongs to the GatB/GatE family. GatB subfamily. As to quaternary structure, subunit of the heterotrimeric GatCAB amidotransferase (AdT) complex, composed of A, B and C subunits.

The protein resides in the mitochondrion. Its subcellular location is the plastid. The protein localises to the chloroplast. It catalyses the reaction L-glutamyl-tRNA(Gln) + L-glutamine + ATP + H2O = L-glutaminyl-tRNA(Gln) + L-glutamate + ADP + phosphate + H(+). Functionally, allows the formation of correctly charged Gln-tRNA(Gln) through the transamidation of misacylated Glu-tRNA(Gln) in chloroplasts and mitochondria. The reaction takes place in the presence of glutamine and ATP through an activated gamma-phospho-Glu-tRNA(Gln). The chain is Glutamyl-tRNA(Gln) amidotransferase subunit B-2, chloroplastic/mitochondrial from Micromonas commoda (strain RCC299 / NOUM17 / CCMP2709) (Picoplanktonic green alga).